Reading from the N-terminus, the 182-residue chain is Homeobox expressed in ES cells 1-A (182 aa).

Positions 103–163 (YRGRRPRTAF…QNRRAKLKRS (61 aa)) form a DNA-binding region, homeobox.

This sequence belongs to the ANF homeobox family. Initially expressed in the anterior dorsal region of early embryos and later exclusively in the primordium of the anterior pituitary gland.

It is found in the nucleus. Appears to be involved in the regional specification of the anterior head of Xenopus embryos. The sequence is that of Homeobox expressed in ES cells 1-A (hesx1-a) from Xenopus laevis (African clawed frog).